The primary structure comprises 175 residues: Large ribosomal subunit protein uL30 (175 aa).

This sequence belongs to the universal ribosomal protein uL30 family. In terms of assembly, part of the 50S ribosomal subunit.

The sequence is that of Large ribosomal subunit protein uL30 from Pyrobaculum neutrophilum (strain DSM 2338 / JCM 9278 / NBRC 100436 / V24Sta) (Thermoproteus neutrophilus).